A 305-amino-acid polypeptide reads, in one-letter code: Putative lipid kinase SAR0780 (305 aa).

Residues 3 to 139 (NKYTHGVLFY…YDVIKINNQY (137 aa)) enclose the DAGKc domain. Residues Ser44, 74–80 (GDGTVNE), and Thr101 contribute to the ATP site. 3 residues coordinate Mg(2+): Ser220, Asp223, and Glu225. The active-site Proton acceptor is Glu281.

The protein belongs to the diacylglycerol/lipid kinase family. Requires Mg(2+) as cofactor.

May catalyze the ATP-dependent phosphorylation of lipids other than diacylglycerol (DAG). In fact, is not able to exhibit diacylglycerol kinase activity in vitro. In Staphylococcus aureus (strain MRSA252), this protein is Putative lipid kinase SAR0780.